Here is a 622-residue protein sequence, read N- to C-terminus: Sodium/potassium/calcium exchanger 4 (622 aa).

The first 38 residues, methionine 1–glycine 38, serve as a signal peptide directing secretion. The Extracellular segment spans residues leucine 39–histidine 97. 2 N-linked (GlcNAc...) asparagine glycosylation sites follow: asparagine 69 and asparagine 76. Residues glycine 98–cysteine 118 traverse the membrane as a helical segment. Residues aspartate 119 to alanine 142 are Cytoplasmic-facing. One copy of the Alpha-1 repeat lies at valine 139–phenylalanine 179. The chain crosses the membrane as a helical span at residues threonine 143–isoleucine 163. Residues threonine 164 to threonine 172 are Extracellular-facing. A helical transmembrane segment spans residues isoleucine 173–glycine 193. Residues glutamine 194 to tryptophan 200 are Cytoplasmic-facing. A helical membrane pass occupies residues tryptophan 201 to isoleucine 221. Residues tyrosine 222–glutamate 224 lie on the Extracellular side of the membrane. Residues glutamine 225–methionine 245 traverse the membrane as a helical segment. The Cytoplasmic portion of the chain corresponds to lysine 246–phenylalanine 457. The segment at alanine 358–aspartate 410 is disordered. Residues proline 380–glutamine 393 are compositionally biased toward low complexity. Positions glutamine 394–proline 404 are enriched in pro residues. The helical transmembrane segment at isoleucine 458–isoleucine 478 threads the bilayer. Glycine 479 is a topological domain (extracellular). A helical membrane pass occupies residues tyrosine 480–valine 500. The stretch at alanine 495–asparagine 526 is one Alpha-2 repeat. Residues proline 501–asparagine 526 lie on the Cytoplasmic side of the membrane. Residues valine 527–tyrosine 547 form a helical membrane-spanning segment. Residues glycine 548–glycine 557 are Extracellular-facing. The helical transmembrane segment at leucine 558 to leucine 578 threads the bilayer. Residues asparagine 579 to lysine 586 lie on the Cytoplasmic side of the membrane. A helical membrane pass occupies residues leucine 587 to phenylalanine 607. Residues asparagine 608–aspartate 622 are Extracellular-facing.

Belongs to the Ca(2+):cation antiporter (CaCA) (TC 2.A.19) family. SLC24A subfamily. Expressed abundantly in all regions of the brain, aorta, lung and thymus. Expressed at lower levels in the stomach and intestine.

It is found in the cell membrane. The protein resides in the cytoplasm. It catalyses the reaction Ca(2+)(out) + K(+)(out) + 4 Na(+)(in) = Ca(2+)(in) + K(+)(in) + 4 Na(+)(out). Its function is as follows. Calcium, potassium:sodium antiporter that transports 1 Ca(2+) and 1 K(+) in exchange for 4 Na(+). Controls the rapid response termination and proper regulation of adaptation in olfactory sensory neurons (OSNs) which subsequently influences how odor information is encoded and perceived. May play a role in calcium transport during amelogenesis. In Homo sapiens (Human), this protein is Sodium/potassium/calcium exchanger 4.